A 103-amino-acid polypeptide reads, in one-letter code: UPF0145 protein Dred_2155 (103 aa).

This sequence belongs to the UPF0145 family.

The sequence is that of UPF0145 protein Dred_2155 from Desulforamulus reducens (strain ATCC BAA-1160 / DSM 100696 / MI-1) (Desulfotomaculum reducens).